Here is a 642-residue protein sequence, read N- to C-terminus: Threonine--tRNA ligase (642 aa).

A TGS domain is found at 1–61 (MPIITLPDGS…STDSDLSIIT (61 aa)). Residues 243 to 534 (DHRKIGKQLD…LIEEYAGKFP (292 aa)) form a catalytic region. Zn(2+) contacts are provided by cysteine 334, histidine 385, and histidine 511.

Belongs to the class-II aminoacyl-tRNA synthetase family. As to quaternary structure, homodimer. It depends on Zn(2+) as a cofactor.

The protein resides in the cytoplasm. The catalysed reaction is tRNA(Thr) + L-threonine + ATP = L-threonyl-tRNA(Thr) + AMP + diphosphate + H(+). Functionally, catalyzes the attachment of threonine to tRNA(Thr) in a two-step reaction: L-threonine is first activated by ATP to form Thr-AMP and then transferred to the acceptor end of tRNA(Thr). Also edits incorrectly charged L-seryl-tRNA(Thr). This chain is Threonine--tRNA ligase, found in Shewanella denitrificans (strain OS217 / ATCC BAA-1090 / DSM 15013).